We begin with the raw amino-acid sequence, 283 residues long: MEVKIAKTAGFCWGVRRTVDKVMEVADHASGPVVTLGPIIHNPQAVARFREKGVGTVDAVGEVGDGTTVVVRTHGAVKEELDRAEGRGLEVVDGTCPYVKYPQAIAQRLSAEGYHVVIVGDANHAEIKGVISYSEGPCTVVKPGGPIPEIPAKKVAVIAQTTCIGADFEAVVGALALRHKEVRAVNTICNDTEERQADARSLAREVDAVVVVGGKNSANTRHLAEICREIQPRTWHVETEAELRPEWFTGCQVVGLSAGASTPDWVVEGVAGWLRGLHRPGTP.

Residue Cys12 participates in [4Fe-4S] cluster binding. (2E)-4-hydroxy-3-methylbut-2-enyl diphosphate-binding residues include His41 and His74. Dimethylallyl diphosphate-binding residues include His41 and His74. 2 residues coordinate isopentenyl diphosphate: His41 and His74. Cys96 lines the [4Fe-4S] cluster pocket. (2E)-4-hydroxy-3-methylbut-2-enyl diphosphate is bound at residue His124. Residue His124 participates in dimethylallyl diphosphate binding. His124 contacts isopentenyl diphosphate. Glu126 acts as the Proton donor in catalysis. (2E)-4-hydroxy-3-methylbut-2-enyl diphosphate is bound at residue Thr161. Position 189 (Cys189) interacts with [4Fe-4S] cluster. Ser217, Asn219, and Ser261 together coordinate (2E)-4-hydroxy-3-methylbut-2-enyl diphosphate. Positions 217, 219, and 261 each coordinate dimethylallyl diphosphate. Ser217, Asn219, and Ser261 together coordinate isopentenyl diphosphate.

The protein belongs to the IspH family. It depends on [4Fe-4S] cluster as a cofactor.

It catalyses the reaction isopentenyl diphosphate + 2 oxidized [2Fe-2S]-[ferredoxin] + H2O = (2E)-4-hydroxy-3-methylbut-2-enyl diphosphate + 2 reduced [2Fe-2S]-[ferredoxin] + 2 H(+). It carries out the reaction dimethylallyl diphosphate + 2 oxidized [2Fe-2S]-[ferredoxin] + H2O = (2E)-4-hydroxy-3-methylbut-2-enyl diphosphate + 2 reduced [2Fe-2S]-[ferredoxin] + 2 H(+). The protein operates within isoprenoid biosynthesis; dimethylallyl diphosphate biosynthesis; dimethylallyl diphosphate from (2E)-4-hydroxy-3-methylbutenyl diphosphate: step 1/1. Its pathway is isoprenoid biosynthesis; isopentenyl diphosphate biosynthesis via DXP pathway; isopentenyl diphosphate from 1-deoxy-D-xylulose 5-phosphate: step 6/6. Catalyzes the conversion of 1-hydroxy-2-methyl-2-(E)-butenyl 4-diphosphate (HMBPP) into a mixture of isopentenyl diphosphate (IPP) and dimethylallyl diphosphate (DMAPP). Acts in the terminal step of the DOXP/MEP pathway for isoprenoid precursor biosynthesis. This Anaeromyxobacter sp. (strain Fw109-5) protein is 4-hydroxy-3-methylbut-2-enyl diphosphate reductase.